The sequence spans 557 residues: Formate--tetrahydrofolate ligase 2 (557 aa).

Residue 66-73 coordinates ATP; the sequence is TPAGEGKT.

Belongs to the formate--tetrahydrofolate ligase family.

The enzyme catalyses (6S)-5,6,7,8-tetrahydrofolate + formate + ATP = (6R)-10-formyltetrahydrofolate + ADP + phosphate. Its pathway is one-carbon metabolism; tetrahydrofolate interconversion. The polypeptide is Formate--tetrahydrofolate ligase 2 (Streptococcus pyogenes serotype M28 (strain MGAS6180)).